A 257-amino-acid chain; its full sequence is THAP domain-containing protein 10 (257 aa).

Residues 1–90 form a THAP-type zinc finger; it reads MPARCVAAHC…LVAGAVPTLH (90 aa). Over residues 154 to 168 the composition is skewed to polar residues; it reads QPHADNPSNTVTSVP. Residues 154 to 178 form a disordered region; the sequence is QPHADNPSNTVTSVPTHCEEGPVHK.

The chain is THAP domain-containing protein 10 (THAP10) from Homo sapiens (Human).